Here is a 258-residue protein sequence, read N- to C-terminus: Ferredoxin--NADP reductase (258 aa).

An FAD-binding FR-type domain is found at 2 to 102 (SNLNVERVLS…RKPTGTLVTS (101 aa)). NADP(+) is bound at residue Asp17. FAD-binding positions include 51 to 54 (RAYS), 67 to 69 (FSI), 74 to 77 (GPLT), and Thr117. NADP(+) is bound by residues 144–145 (VR), 181–182 (TR), and Arg190. 254-258 (AFVEK) is a binding site for FAD.

Belongs to the ferredoxin--NADP reductase type 1 family. As to quaternary structure, monomer. FAD serves as cofactor.

The enzyme catalyses 2 reduced [2Fe-2S]-[ferredoxin] + NADP(+) + H(+) = 2 oxidized [2Fe-2S]-[ferredoxin] + NADPH. Transports electrons between ferredoxin and NADPH. This Azotobacter vinelandii protein is Ferredoxin--NADP reductase.